The primary structure comprises 423 residues: Imidazolonepropionase (423 aa).

Fe(3+)-binding residues include H87 and H89. Residues H87 and H89 each contribute to the Zn(2+) site. 4-imidazolone-5-propanoate is bound by residues R96, Y159, and H192. Y159 serves as a coordination point for N-formimidoyl-L-glutamate. H257 provides a ligand contact to Fe(3+). A Zn(2+)-binding site is contributed by H257. 4-imidazolone-5-propanoate is bound at residue E260. D331 is a binding site for Fe(3+). D331 contributes to the Zn(2+) binding site. 2 residues coordinate N-formimidoyl-L-glutamate: N333 and G335. A 4-imidazolone-5-propanoate-binding site is contributed by S336.

The protein belongs to the metallo-dependent hydrolases superfamily. HutI family. The cofactor is Zn(2+). Requires Fe(3+) as cofactor.

It is found in the cytoplasm. It catalyses the reaction 4-imidazolone-5-propanoate + H2O = N-formimidoyl-L-glutamate. It participates in amino-acid degradation; L-histidine degradation into L-glutamate; N-formimidoyl-L-glutamate from L-histidine: step 3/3. Catalyzes the hydrolytic cleavage of the carbon-nitrogen bond in imidazolone-5-propanoate to yield N-formimidoyl-L-glutamate. It is the third step in the universal histidine degradation pathway. In Porphyromonas gingivalis (strain ATCC BAA-308 / W83), this protein is Imidazolonepropionase.